Reading from the N-terminus, the 258-residue chain is Regulatory protein RecX (258 aa).

The protein belongs to the RecX family.

It is found in the cytoplasm. Functionally, modulates RecA activity. This chain is Regulatory protein RecX, found in Streptococcus agalactiae serotype Ia (strain ATCC 27591 / A909 / CDC SS700).